Reading from the N-terminus, the 149-residue chain is Protein SprT-like (149 aa).

The SprT-like domain occupies 5–143; sequence DYVKQVSLED…CGLCRGKLLL (139 aa). A Zn(2+)-binding site is contributed by His64. The active site involves Glu65. Residue His68 coordinates Zn(2+).

It belongs to the SprT family. It depends on Zn(2+) as a cofactor.

The protein resides in the cytoplasm. This chain is Protein SprT-like, found in Streptococcus pneumoniae (strain Hungary19A-6).